We begin with the raw amino-acid sequence, 180 residues long: Regulator of G-protein signaling 8 (180 aa).

Ser26 is subject to Phosphoserine. Positions 56-171 (SFDVLLSHKY…FLRSKMYLDL (116 aa)) constitute an RGS domain.

In terms of assembly, interacts with GNAO1. Interacts with GNAI3.

The protein localises to the cell membrane. It is found in the membrane. Its subcellular location is the perikaryon. The protein resides in the cell projection. It localises to the dendrite. The protein localises to the nucleus. Its function is as follows. Regulates G protein-coupled receptor signaling cascades, including signaling via muscarinic acetylcholine receptor CHRM2 and dopamine receptor DRD2. Inhibits signal transduction by increasing the GTPase activity of G protein alpha subunits, thereby driving them into their inactive GDP-bound form. Modulates the activity of potassium channels that are activated in response to DRD2 and CHRM2 signaling. This chain is Regulator of G-protein signaling 8 (RGS8), found in Homo sapiens (Human).